A 232-amino-acid chain; its full sequence is Large ribosomal subunit protein uL1 (232 aa).

It belongs to the universal ribosomal protein uL1 family. In terms of assembly, part of the 50S ribosomal subunit.

Functionally, binds directly to 23S rRNA. The L1 stalk is quite mobile in the ribosome, and is involved in E site tRNA release. Protein L1 is also a translational repressor protein, it controls the translation of the L11 operon by binding to its mRNA. The protein is Large ribosomal subunit protein uL1 of Burkholderia ambifaria (strain MC40-6).